The primary structure comprises 466 residues: Argininosuccinate lyase (466 aa).

The protein belongs to the lyase 1 family. Argininosuccinate lyase subfamily.

The protein localises to the cytoplasm. The enzyme catalyses 2-(N(omega)-L-arginino)succinate = fumarate + L-arginine. Its pathway is amino-acid biosynthesis; L-arginine biosynthesis; L-arginine from L-ornithine and carbamoyl phosphate: step 3/3. In Methylocella silvestris (strain DSM 15510 / CIP 108128 / LMG 27833 / NCIMB 13906 / BL2), this protein is Argininosuccinate lyase.